The chain runs to 670 residues: Extracellular matrix protein 2 (670 aa).

The first 19 residues, 1–19, serve as a signal peptide directing secretion; that stretch reads MKLAVLFCFILLIVLQTDC. Residues 96 to 153 form the VWFC domain; sequence GYCFVKGMIMYNKAVWSPEPCTTCLCSNGRVLCDETECHPKACPYTIKPEGECCPICS. Residues 185 to 270 form a disordered region; sequence SEEDEEIAEG…EEDAIRGDVF (86 aa). Basic and acidic residues predominate over residues 192–227; it reads AEGHKEHKKETSVPTKIHGDGERTERKLRPEKEGRS. The segment covering 241 to 263 has biased composition (acidic residues); sequence ESKEETEREGEEEEEEEEEEEED. The Cell attachment site motif lies at 266 to 268; that stretch reads RGD. Positions 278–315 constitute an LRRNT domain; that stretch reads PGTPRGRPRLPRSCSLSYRTISCVHADFTEIPPITAPE. LRR repeat units follow at residues 339-359, 365-386, 387-407, 410-430, 436-456, 457-478, 481-501, 507-528, 529-549, 553-573, 580-601, 603-624, and 632-655; these read NLERLDLSRNNITSSGIGPKA, KLMRLNMDGNNLVHIPSDLPST, LEELKINDNNLQAIDEKSLSD, QLVTLELEGNNLSEINVDPLA, SLSYLRLGRNKFRIIPQGLPA, STEELYLENNQIEEITEICFNH, KITMIILRYNKIEESRIAPLA, NLESIDLSYNKLYHVPSYLPKS, LLHLVLIGNQIDRIPGYVFGH, GLEYLYLSFNRLSDDGVDLVS, SLRELFLDHNDFKSIPPGIQDM, ALHFLRLNNNKIRNIHPEQICN, and ALEHLHLENNYIRTREISSYAFSC. N-linked (GlcNAc...) asparagine glycosylation occurs at asparagine 349. Residue asparagine 420 is glycosylated (N-linked (GlcNAc...) asparagine). N-linked (GlcNAc...) asparagine glycosylation occurs at asparagine 477.

Belongs to the small leucine-rich proteoglycan (SLRP) family. SLRP class I subfamily. As to quaternary structure, interacts with numerous extracellular matrix proteins. Interacts with isoform 1 of MSL1. Interacts with isoform 3 of RASSF1.

The protein localises to the secreted. Its subcellular location is the extracellular space. The protein resides in the extracellular matrix. Promotes matrix assembly and cell adhesiveness. The sequence is that of Extracellular matrix protein 2 (Ecm2) from Mus musculus (Mouse).